The chain runs to 476 residues: Protein transport protein Sec61 subunit alpha-like 1 (476 aa).

Residues 2–33 are Cytoplasmic-facing; sequence AIKFLEVIKPFCAVLPEIQKPERKIQFREKVL. A helical membrane pass occupies residues 34-53; that stretch reads WTAITLFIFLVCCQIPLFGI. Topologically, residues 54-76 are lumenal; the sequence is MSSDSADPFYWMRVILASNRGTL. Residues 77–96 traverse the membrane as a helical segment; sequence MELGISPIVTSGLIMQLLAG. Topologically, residues 97 to 117 are cytoplasmic; that stretch reads AKIIEVGDTPKDRALFNGAQK. The chain crosses the membrane as a helical span at residues 118–138; sequence LFGMIITIGQAIVYVMTGMYG. The Lumenal segment spans residues 139-144; sequence DPSEMG. A helical transmembrane segment spans residues 145–165; sequence AGICLLIIIQLFVAGLIVLLL. Residues 166–172 are Cytoplasmic-facing; that stretch reads DELLQKG. Residues 173–193 traverse the membrane as a helical segment; the sequence is YGLGSGISLFIATNICETIVW. Residues 194 to 240 are Lumenal-facing; it reads KAFSPTTVNTGRGTEFEGAIIALFHLLATRTDKVRALREAFYRQNLP. The chain crosses the membrane as a helical span at residues 241-261; that stretch reads NLMNLIATVFVFAVVIYFQGF. At 262–288 the chain is on the cytoplasmic side; it reads RVDLPIKSARYRGQYNTYPIKLFYTSN. The chain crosses the membrane as a helical span at residues 289 to 309; sequence IPIILQSALVSNLYVISQMLS. The Lumenal segment spans residues 310 to 354; that stretch reads TRFSGNFLVNLLGTWSDTSSGGPARAYPVGGLCYYLSPPESFGSV. The chain crosses the membrane as a helical span at residues 355–375; the sequence is LDDPVHAVIYIVFMLGSCAFF. Over 376–420 the chain is Cytoplasmic; sequence SKTWIEVSGSSAKDVAKQLKEQQMVMRGHRETSMVHELNRYIPTA. Residues 421–441 form a helical membrane-spanning segment; the sequence is AAFGGLCIGGLSVMADFLGAI. Topologically, residues 442–445 are lumenal; the sequence is GSGT. Residues 446–462 traverse the membrane as a helical segment; it reads GILLAVTIIYQYFEIFV. The Cytoplasmic segment spans residues 463 to 476; it reads KEQSEVGSMGALLF.

This sequence belongs to the SecY/SEC61-alpha family. The SEC61 channel-forming translocon complex consists of channel-forming core components SEC61A1, SEC61B and SEC61G and different auxiliary components such as SEC62 and SEC63. The SEC61 channel associates with the multi-pass translocon (MPT) complex.

Its subcellular location is the endoplasmic reticulum membrane. Its function is as follows. Component of SEC61 channel-forming translocon complex that mediates transport of signal peptide-containing precursor polypeptides across the endoplasmic reticulum (ER). Forms a ribosome receptor and a gated pore in the ER membrane, both functions required for cotranslational translocation of nascent polypeptides. May cooperate with auxiliary protein SEC62, SEC63 and HSPA5/BiP to enable post-translational transport of small presecretory proteins. The SEC61 channel is also involved in ER membrane insertion of transmembrane proteins: it mediates membrane insertion of the first few transmembrane segments of proteins, while insertion of subsequent transmembrane regions of multi-pass membrane proteins is mediated by the multi-pass translocon (MPT) complex. Plays a role in the pronephric kidney tubule development. The polypeptide is Protein transport protein Sec61 subunit alpha-like 1 (sec61al1) (Danio rerio (Zebrafish)).